A 463-amino-acid chain; its full sequence is Glutamate--tRNA ligase 1 (463 aa).

Positions 10–20 (PSPTGYLHIGG) match the 'HIGH' region motif. Positions 238–242 (KLSKR) match the 'KMSKS' region motif. K241 contributes to the ATP binding site.

The protein belongs to the class-I aminoacyl-tRNA synthetase family. Glutamate--tRNA ligase type 1 subfamily. In terms of assembly, monomer.

The protein localises to the cytoplasm. It catalyses the reaction tRNA(Glu) + L-glutamate + ATP = L-glutamyl-tRNA(Glu) + AMP + diphosphate. Functionally, catalyzes the attachment of glutamate to tRNA(Glu) in a two-step reaction: glutamate is first activated by ATP to form Glu-AMP and then transferred to the acceptor end of tRNA(Glu). The sequence is that of Glutamate--tRNA ligase 1 from Helicobacter pylori (strain P12).